A 494-amino-acid polypeptide reads, in one-letter code: Aspartyl/glutamyl-tRNA(Asn/Gln) amidotransferase subunit B (494 aa).

The protein belongs to the GatB/GatE family. GatB subfamily. As to quaternary structure, heterotrimer of A, B and C subunits.

It carries out the reaction L-glutamyl-tRNA(Gln) + L-glutamine + ATP + H2O = L-glutaminyl-tRNA(Gln) + L-glutamate + ADP + phosphate + H(+). The enzyme catalyses L-aspartyl-tRNA(Asn) + L-glutamine + ATP + H2O = L-asparaginyl-tRNA(Asn) + L-glutamate + ADP + phosphate + 2 H(+). In terms of biological role, allows the formation of correctly charged Asn-tRNA(Asn) or Gln-tRNA(Gln) through the transamidation of misacylated Asp-tRNA(Asn) or Glu-tRNA(Gln) in organisms which lack either or both of asparaginyl-tRNA or glutaminyl-tRNA synthetases. The reaction takes place in the presence of glutamine and ATP through an activated phospho-Asp-tRNA(Asn) or phospho-Glu-tRNA(Gln). This chain is Aspartyl/glutamyl-tRNA(Asn/Gln) amidotransferase subunit B, found in Synechococcus sp. (strain CC9902).